A 520-amino-acid chain; its full sequence is Cobyric acid synthase (520 aa).

In terms of domain architecture, GATase cobBQ-type spans V275–F453. Residue C356 is the Nucleophile of the active site. H445 is a catalytic residue.

The protein belongs to the CobB/CobQ family. CobQ subfamily.

The protein operates within cofactor biosynthesis; adenosylcobalamin biosynthesis. Catalyzes amidations at positions B, D, E, and G on adenosylcobyrinic A,C-diamide. NH(2) groups are provided by glutamine, and one molecule of ATP is hydrogenolyzed for each amidation. This chain is Cobyric acid synthase, found in Frankia casuarinae (strain DSM 45818 / CECT 9043 / HFP020203 / CcI3).